Consider the following 538-residue polypeptide: Probable folate-biopterin transporter 9, chloroplastic (538 aa).

The N-terminal 57 residues, 1–57 (MNNPLLSISNPVKFFKPPIPYRISLNTTINKKQKHQSKTLVVKSNKRSTTSLTSSVS), are a transit peptide targeting the chloroplast. The next 12 helical transmembrane spans lie at 85 to 105 (VLLCALGYWVQGLRCFSWLAL), 129 to 149 (LPMVAKPLYGVLSDVLYIGGA), 152 to 172 (VPYISVGVLLQGLAWGSLAIF), 178 to 198 (VLPSLMAFILLSNLGASITEV), 220 to 240 (ALMASAVGGILGNLLGGYCLL), 246 to 266 (ILFLAFTALLSLQLIVSLSSK), 309 to 329 (LIWIVSSIALVPLLSGSVFCY), 339 to 359 (SVIGMSKVIGQLMLLCLTVVY), 370 to 390 (ALIHIVQLLYAFSLLFDYILV), 395 to 415 (LAFGISNTAFVLCFSSVAEIL), 447 to 467 (LCLSSVVSGFTGVGMANMIGI), and 479 to 499 (ILIQSLAALVPLWFIHYVPML).

This sequence belongs to the major facilitator superfamily. Folate-biopterin transporter (TC 2.A.71) family.

The protein localises to the plastid. The protein resides in the chloroplast membrane. Could mediate folate transport. The sequence is that of Probable folate-biopterin transporter 9, chloroplastic from Arabidopsis thaliana (Mouse-ear cress).